The sequence spans 96 residues: UPF0235 protein YPK_0828 (96 aa).

The protein belongs to the UPF0235 family.

This chain is UPF0235 protein YPK_0828, found in Yersinia pseudotuberculosis serotype O:3 (strain YPIII).